Consider the following 282-residue polypeptide: Shikimate kinase (282 aa).

Pro-86–Ala-96 provides a ligand contact to ATP.

This sequence belongs to the GHMP kinase family. Archaeal shikimate kinase subfamily.

It is found in the cytoplasm. It carries out the reaction shikimate + ATP = 3-phosphoshikimate + ADP + H(+). It participates in metabolic intermediate biosynthesis; chorismate biosynthesis; chorismate from D-erythrose 4-phosphate and phosphoenolpyruvate: step 5/7. The protein is Shikimate kinase (aroK) of Methanocaldococcus jannaschii (strain ATCC 43067 / DSM 2661 / JAL-1 / JCM 10045 / NBRC 100440) (Methanococcus jannaschii).